A 416-amino-acid chain; its full sequence is UDP-N-acetylmuramoylalanine--D-glutamate ligase (416 aa).

104–110 serves as a coordination point for ATP; the sequence is GSNGKST.

The protein belongs to the MurCDEF family.

It localises to the cytoplasm. It carries out the reaction UDP-N-acetyl-alpha-D-muramoyl-L-alanine + D-glutamate + ATP = UDP-N-acetyl-alpha-D-muramoyl-L-alanyl-D-glutamate + ADP + phosphate + H(+). Its pathway is cell wall biogenesis; peptidoglycan biosynthesis. Its function is as follows. Cell wall formation. Catalyzes the addition of glutamate to the nucleotide precursor UDP-N-acetylmuramoyl-L-alanine (UMA). In Francisella tularensis subsp. tularensis (strain FSC 198), this protein is UDP-N-acetylmuramoylalanine--D-glutamate ligase.